We begin with the raw amino-acid sequence, 159 residues long: Small ribosomal subunit protein bS6 (159 aa).

Residues 93–151 (VDEHEEGPSAMMRKADRDRERDDRGPREGGFRGDREGRGDREGGGFRGDRGPRRPREDA) are compositionally biased toward basic and acidic residues. A disordered region spans residues 93–159 (VDEHEEGPSA…DADTAAASEE (67 aa)).

It belongs to the bacterial ribosomal protein bS6 family.

In terms of biological role, binds together with bS18 to 16S ribosomal RNA. This chain is Small ribosomal subunit protein bS6, found in Rhodopseudomonas palustris (strain HaA2).